The sequence spans 209 residues: Ribosomal RNA large subunit methyltransferase E (209 aa).

The S-adenosyl-L-methionine site is built by Gly63, Trp65, Asp83, Asp99, and Asp124. Lys164 (proton acceptor) is an active-site residue. The TRAM domain occupies 191–209 (EASRGRSREVYIVATGYKG).

Belongs to the class I-like SAM-binding methyltransferase superfamily. RNA methyltransferase RlmE family.

Its subcellular location is the cytoplasm. The enzyme catalyses uridine(2552) in 23S rRNA + S-adenosyl-L-methionine = 2'-O-methyluridine(2552) in 23S rRNA + S-adenosyl-L-homocysteine + H(+). Specifically methylates the uridine in position 2552 of 23S rRNA at the 2'-O position of the ribose in the fully assembled 50S ribosomal subunit. The protein is Ribosomal RNA large subunit methyltransferase E of Haemophilus influenzae (strain ATCC 51907 / DSM 11121 / KW20 / Rd).